A 129-amino-acid polypeptide reads, in one-letter code: Small ribosomal subunit protein uS11 (129 aa).

In terms of assembly, part of the 30S ribosomal subunit. Interacts with proteins S7 and S18. Binds to IF-3. May be methylated on an undetermined residue.

Located on the platform of the 30S subunit, it bridges several disparate RNA helices of the 16S rRNA. Forms part of the Shine-Dalgarno cleft in the 70S ribosome. In Rhodopseudomonas palustris (strain ATCC BAA-98 / CGA009), this protein is Small ribosomal subunit protein uS11.